The following is a 630-amino-acid chain: Chaperone protein HtpG (630 aa).

Positions methionine 1–arginine 339 are a; substrate-binding. The interval glutamate 340–arginine 556 is b. The segment at methionine 557–isoleucine 630 is c.

This sequence belongs to the heat shock protein 90 family. Homodimer.

Its subcellular location is the cytoplasm. Molecular chaperone. Has ATPase activity. In Hydrogenovibrio crunogenus (strain DSM 25203 / XCL-2) (Thiomicrospira crunogena), this protein is Chaperone protein HtpG.